Reading from the N-terminus, the 425-residue chain is Spermatogenesis- and oogenesis-specific basic helix-loop-helix-containing protein 2 (425 aa).

Residues 201–252 (KISLLHSSKEKLRRERIKYCCEQLRTLLPYVKGRKNDAASVLEATVDYVKYI) form the bHLH domain.

In terms of assembly, forms both hetero- and homodimers with SOHLH1.

It localises to the nucleus. Its subcellular location is the cytoplasm. In terms of biological role, transcription regulator of both male and female germline differentiation. Suppresses genes involved in spermatogonial stem cells maintenance, and induces genes important for spermatogonial differentiation. Coordinates oocyte differentiation without affecting meiosis I. The protein is Spermatogenesis- and oogenesis-specific basic helix-loop-helix-containing protein 2 (SOHLH2) of Homo sapiens (Human).